Reading from the N-terminus, the 711-residue chain is Catalase HPII (711 aa).

A compositionally biased stretch (basic and acidic residues) spans 1–10; it reads MPSKKTDAPK. The disordered stretch occupies residues 1 to 27; the sequence is MPSKKTDAPKQSEAAGTQTPDRANTNA. The span at 14 to 27 shows a compositional bias: polar residues; the sequence is AAGTQTPDRANTNA. Residues histidine 92 and asparagine 165 contribute to the active site. Tyrosine 379 provides a ligand contact to heme.

The protein belongs to the catalase family. HPII subfamily. Requires heme as cofactor.

The protein localises to the cytoplasm. The catalysed reaction is 2 H2O2 = O2 + 2 H2O. In terms of biological role, decomposes hydrogen peroxide into water and oxygen; serves to protect cells from the toxic effects of hydrogen peroxide. The protein is Catalase HPII (katE) of Pseudomonas putida (Arthrobacter siderocapsulatus).